The following is a 407-amino-acid chain: Succinate--CoA ligase [ADP-forming] subunit beta, hydrogenosomal (407 aa).

The N-terminal 9 residues, 1–9, are a transit peptide targeting the hydrogenosome; it reads MLSSSFARN. Residues 18 to 261 enclose the ATP-grasp domain; the sequence is KEICAKYNVA…LKQVNPFEIR (244 aa). ATP is bound by residues K55, 62-64, and E124; that span reads GRG. N216 and D230 together coordinate Mg(2+). Substrate is bound by residues N281 and 338–340; that span reads GIV.

The protein belongs to the succinate/malate CoA ligase beta subunit family. As to quaternary structure, heterodimer of an alpha and a beta subunit. Mg(2+) serves as cofactor.

The protein resides in the hydrogenosome. The enzyme catalyses succinate + ATP + CoA = succinyl-CoA + ADP + phosphate. Its pathway is carbohydrate metabolism; tricarboxylic acid cycle; succinate from succinyl-CoA (ligase route): step 1/1. Succinyl-CoA synthetase functions in the citric acid cycle (TCA), coupling the hydrolysis of succinyl-CoA to the synthesis of ATP and thus represents the only step of substrate-level phosphorylation in the TCA. The beta subunit provides nucleotide specificity of the enzyme and binds the substrate succinate, while the binding sites for coenzyme A and phosphate are found in the alpha subunit. The sequence is that of Succinate--CoA ligase [ADP-forming] subunit beta, hydrogenosomal from Trichomonas vaginalis.